Reading from the N-terminus, the 439-residue chain is Uracil-regulated protein 1 (439 aa).

Positions 1 to 24 (MLATEQSRPAECNGAHAHEKTEEV) are disordered. A GTP-binding site is contributed by 268–272 (RVHDE). Zn(2+) is bound by residues cysteine 273, cysteine 284, and cysteine 286. 315–317 (EGR) is a GTP binding site. Aspartate 353 functions as the Proton acceptor in the catalytic mechanism. Arginine 355 functions as the Nucleophile in the catalytic mechanism. GTP-binding residues include serine 377 and lysine 382.

It belongs to the GTP cyclohydrolase II family.

The protein resides in the cytoplasm. Its subcellular location is the nucleus. This chain is Uracil-regulated protein 1 (urg1), found in Schizosaccharomyces pombe (strain 972 / ATCC 24843) (Fission yeast).